Here is a 216-residue protein sequence, read N- to C-terminus: Putative cat eye syndrome critical region protein 9 (216 aa).

The first 23 residues, 1-23, serve as a signal peptide directing secretion; sequence MQSHLAPLACAAAAGRAGGSCQA. Asn148 is a glycosylation site (N-linked (GlcNAc...) asparagine).

In terms of tissue distribution, ubiquitously expressed with higher expression in heart.

It is found in the secreted. In Homo sapiens (Human), this protein is Putative cat eye syndrome critical region protein 9 (CECR9).